Consider the following 294-residue polypeptide: Ribosomal RNA small subunit methyltransferase H (294 aa).

Residues 36–38, aspartate 55, phenylalanine 82, aspartate 97, and glutamine 104 each bind S-adenosyl-L-methionine; that span reads GGH.

This sequence belongs to the methyltransferase superfamily. RsmH family.

It is found in the cytoplasm. The enzyme catalyses cytidine(1402) in 16S rRNA + S-adenosyl-L-methionine = N(4)-methylcytidine(1402) in 16S rRNA + S-adenosyl-L-homocysteine + H(+). Specifically methylates the N4 position of cytidine in position 1402 (C1402) of 16S rRNA. This chain is Ribosomal RNA small subunit methyltransferase H, found in Synechococcus sp. (strain CC9605).